Reading from the N-terminus, the 590-residue chain is Multidrug resistance ABC transporter ATP-binding and permease protein (590 aa).

6 helical membrane-spanning segments follow: residues Tyr35–Val55, Ile79–Phe99, Ile150–Met170, Leu176–Gly196, Val261–Ile281, and Leu292–Phe312. Positions Phe38–Lys317 constitute an ABC transmembrane type-1 domain. One can recognise an ABC transporter domain in the interval Leu349 to Glu584. Gly382 to Ser389 contacts ATP.

This sequence belongs to the ABC transporter superfamily. Multidrug exporter LmrA (TC 3.A.1.117.1) family. In terms of assembly, homodimer.

Its subcellular location is the cell membrane. The catalysed reaction is ATP + H2O + xenobioticSide 1 = ADP + phosphate + xenobioticSide 2.. Its function is as follows. Efflux transporter for a variety of amphiphilic cationic compounds, including antibiotics. This is Multidrug resistance ABC transporter ATP-binding and permease protein (lmrA) from Lactococcus lactis subsp. cremoris (strain MG1363).